Consider the following 355-residue polypeptide: UDP-N-acetylglucosamine--N-acetylmuramyl-(pentapeptide) pyrophosphoryl-undecaprenol N-acetylglucosamine transferase (355 aa).

Residues 15-17 (TGG), Asn127, Arg163, Ser191, Ile244, 263-268 (ALTVSE), and Gln288 contribute to the UDP-N-acetyl-alpha-D-glucosamine site.

It belongs to the glycosyltransferase 28 family. MurG subfamily.

Its subcellular location is the cell inner membrane. The enzyme catalyses di-trans,octa-cis-undecaprenyl diphospho-N-acetyl-alpha-D-muramoyl-L-alanyl-D-glutamyl-meso-2,6-diaminopimeloyl-D-alanyl-D-alanine + UDP-N-acetyl-alpha-D-glucosamine = di-trans,octa-cis-undecaprenyl diphospho-[N-acetyl-alpha-D-glucosaminyl-(1-&gt;4)]-N-acetyl-alpha-D-muramoyl-L-alanyl-D-glutamyl-meso-2,6-diaminopimeloyl-D-alanyl-D-alanine + UDP + H(+). The protein operates within cell wall biogenesis; peptidoglycan biosynthesis. In terms of biological role, cell wall formation. Catalyzes the transfer of a GlcNAc subunit on undecaprenyl-pyrophosphoryl-MurNAc-pentapeptide (lipid intermediate I) to form undecaprenyl-pyrophosphoryl-MurNAc-(pentapeptide)GlcNAc (lipid intermediate II). In Photorhabdus laumondii subsp. laumondii (strain DSM 15139 / CIP 105565 / TT01) (Photorhabdus luminescens subsp. laumondii), this protein is UDP-N-acetylglucosamine--N-acetylmuramyl-(pentapeptide) pyrophosphoryl-undecaprenol N-acetylglucosamine transferase.